The primary structure comprises 859 residues: Auxin response factor 2 (859 aa).

A disordered region spans residues 1–48 (MASSEVSMKGNRGGDNFSSSGFSDPKETRNVSVAGEGQKSNSTRSAAA). Over residues 14-23 (GDNFSSSGFS) the composition is skewed to low complexity. Positions 164–266 (FCKTLTASDT…ELRVGVRRAM (103 aa)) form a DNA-binding region, TF-B3. Positions 396–407 (LAPPALSPVPMP) are enriched in pro residues. Disordered regions lie at residues 396 to 442 (LAPP…LPAS), 687 to 736 (IASP…RSCT), and 829 to 859 (RSEE…AGNS). Composition is skewed to polar residues over residues 416 to 426 (IAPSSPDSSML) and 695 to 704 (LSDQSKGSKS). The region spanning 733–817 (RSCTKVHKQG…RKIFIYTKEE (85 aa)) is the PB1 domain. Positions 847-859 (SASNPSLSSAGNS) are enriched in polar residues.

Belongs to the ARF family. As to quaternary structure, homodimers and heterodimers. Interacts with ARF1. As to expression, expressed in the whole plant.

The protein resides in the nucleus. Auxin response factors (ARFs) are transcriptional factors that bind specifically to the DNA sequence 5'-TGTCTC-3' found in the auxin-responsive promoter elements (AuxREs). Could act as transcriptional activator or repressor. Formation of heterodimers with Aux/IAA proteins may alter their ability to modulate early auxin response genes expression. Promotes flowering, stamen development, floral organ abscission and fruit dehiscence. Functions independently of ethylene and cytokinin response pathways. May act as a repressor of cell division and organ growth. The protein is Auxin response factor 2 (ARF2) of Arabidopsis thaliana (Mouse-ear cress).